Consider the following 375-residue polypeptide: Protein MGF 360-5L (375 aa).

This sequence belongs to the asfivirus MGF 360 family.

Its function is as follows. Plays a role in virus cell tropism, and may be required for efficient virus replication in macrophages. This is Protein MGF 360-5L from African swine fever virus (isolate Portugal/Lis 57/1957) (ASFV).